A 356-amino-acid polypeptide reads, in one-letter code: Butyrate kinase (356 aa).

Belongs to the acetokinase family.

It is found in the cytoplasm. It carries out the reaction butanoate + ATP = butanoyl phosphate + ADP. It functions in the pathway lipid metabolism; butanoate metabolism. Its function is as follows. Catalyzes the conversion of butyryl-CoA through butyryl phosphate to butyrate. In Clostridium perfringens (strain ATCC 13124 / DSM 756 / JCM 1290 / NCIMB 6125 / NCTC 8237 / Type A), this protein is Butyrate kinase (buk).